Reading from the N-terminus, the 141-residue chain is Ribosome-binding factor A (141 aa).

It belongs to the RbfA family. As to quaternary structure, monomer. Binds 30S ribosomal subunits, but not 50S ribosomal subunits or 70S ribosomes.

Its subcellular location is the cytoplasm. Its function is as follows. One of several proteins that assist in the late maturation steps of the functional core of the 30S ribosomal subunit. Associates with free 30S ribosomal subunits (but not with 30S subunits that are part of 70S ribosomes or polysomes). Required for efficient processing of 16S rRNA. May interact with the 5'-terminal helix region of 16S rRNA. In Afipia carboxidovorans (strain ATCC 49405 / DSM 1227 / KCTC 32145 / OM5) (Oligotropha carboxidovorans), this protein is Ribosome-binding factor A.